A 73-amino-acid polypeptide reads, in one-letter code: Putative antitoxin VapB16 (73 aa).

The protein belongs to the UPF0330 family.

In terms of biological role, possibly the antitoxin component of a type II toxin-antitoxin (TA) system. Its cognate toxin is VapC16 (Potential). This is Putative antitoxin VapB16 (vapB16) from Archaeoglobus fulgidus (strain ATCC 49558 / DSM 4304 / JCM 9628 / NBRC 100126 / VC-16).